The chain runs to 118 residues: Small ribosomal subunit protein uS13 (118 aa).

Residues 91-118 (HRRSLPVRGQRTKTNARTRKGPRKPIKA) are disordered.

This sequence belongs to the universal ribosomal protein uS13 family. As to quaternary structure, part of the 30S ribosomal subunit. Forms a loose heterodimer with protein S19. Forms two bridges to the 50S subunit in the 70S ribosome.

In terms of biological role, located at the top of the head of the 30S subunit, it contacts several helices of the 16S rRNA. In the 70S ribosome it contacts the 23S rRNA (bridge B1a) and protein L5 of the 50S subunit (bridge B1b), connecting the 2 subunits; these bridges are implicated in subunit movement. Contacts the tRNAs in the A and P-sites. The protein is Small ribosomal subunit protein uS13 of Francisella tularensis subsp. tularensis (strain FSC 198).